A 512-amino-acid chain; its full sequence is Cytochrome P450 monooxygenase gliC (512 aa).

The N-terminal stretch at 1-19 is a signal peptide; that stretch reads MAFTLTILVPCMVLALVAA. N-linked (GlcNAc...) asparagine glycans are attached at residues Asn-118, Asn-421, and Asn-434. A heme-binding site is contributed by Cys-452.

The protein belongs to the cytochrome P450 family. Heme serves as cofactor.

Its pathway is mycotoxin biosynthesis. Cytochrome P450 monooxygenase; part of the gene cluster that mediates the biosynthesis of gliotoxin, a member of the epipolythiodioxopiperazine (ETP) class of toxins characterized by a disulfide bridged cyclic dipeptide. The first step in gliotoxin biosynthesis is the condensation of serine and phenylalanine to form the cyclo-L-phenylalanyl-L-serine diketopiperazine (DKP) by the NRPS gliP. GliP is also able to produce the DKP cyclo-L-tryptophanyl-L-serine, suggesting that the substrate specificity of the first adenylation (A) domain in gliP is sufficiently relaxed to accommodate both L-Phe and L-Trp. The cytochrome P450 monooxygenase gliC has been shown to catalyze the subsequent hydroxylation of the alpha-carbon of L-Phe in cyclo-L-phenylalanyl-L-serine whereas the second cytochrome P450 enzyme, gliF, is presumably involved in the modification of the DKP side chain. The glutathione S-transferase (GST) gliG then forms a bis-glutathionylated biosynthetic intermediate which is responsible for the sulfurization of gliotoxin. This bis-glutathionylated intermediate is subsequently processed by the gamma-glutamyl cyclotransferase gliK to remove both gamma-glutamyl moieties. Subsequent processing via gliI yields a biosynthetic intermediate, which is N-methylated via the N-methyltransferase gliN, before the gliotoxin oxidoreductase gliT-mediated disulfide bridge closure. GliN-mediated amide methylation confers stability to ETP, damping the spontaneous formation of tri- and tetrasulfides. Intracellular dithiol gliotoxin oxidized by gliT is subsequently effluxed by gliA. Gliotoxin contributes to pathogenesis during invasive aspergillosis. In macrophages and neutrophils, gliotoxin showed inhibition of various different cell functions including cytokine production, antigen presentation, phagocytosis, and production of reactive oxygen species. The sequence is that of Cytochrome P450 monooxygenase gliC from Aspergillus fumigatus (strain ATCC MYA-4609 / CBS 101355 / FGSC A1100 / Af293) (Neosartorya fumigata).